We begin with the raw amino-acid sequence, 556 residues long: 2-succinyl-5-enolpyruvyl-6-hydroxy-3-cyclohexene-1-carboxylate synthase (556 aa).

The protein belongs to the TPP enzyme family. MenD subfamily. As to quaternary structure, homodimer. Mg(2+) is required as a cofactor. The cofactor is Mn(2+). It depends on thiamine diphosphate as a cofactor.

It catalyses the reaction isochorismate + 2-oxoglutarate + H(+) = 5-enolpyruvoyl-6-hydroxy-2-succinyl-cyclohex-3-ene-1-carboxylate + CO2. It participates in quinol/quinone metabolism; 1,4-dihydroxy-2-naphthoate biosynthesis; 1,4-dihydroxy-2-naphthoate from chorismate: step 2/7. The protein operates within quinol/quinone metabolism; menaquinone biosynthesis. Functionally, catalyzes the thiamine diphosphate-dependent decarboxylation of 2-oxoglutarate and the subsequent addition of the resulting succinic semialdehyde-thiamine pyrophosphate anion to isochorismate to yield 2-succinyl-5-enolpyruvyl-6-hydroxy-3-cyclohexene-1-carboxylate (SEPHCHC). The chain is 2-succinyl-5-enolpyruvyl-6-hydroxy-3-cyclohexene-1-carboxylate synthase from Salmonella heidelberg (strain SL476).